The primary structure comprises 123 residues: Small ribosomal subunit protein uS12 (123 aa).

Asp89 carries the 3-methylthioaspartic acid modification. The interval 104-123 (SVGVKDRKKSRSKYGAKRPK) is disordered. A compositionally biased stretch (basic residues) spans 109 to 123 (DRKKSRSKYGAKRPK).

It belongs to the universal ribosomal protein uS12 family. As to quaternary structure, part of the 30S ribosomal subunit. Contacts proteins S8 and S17. May interact with IF1 in the 30S initiation complex.

Functionally, with S4 and S5 plays an important role in translational accuracy. Interacts with and stabilizes bases of the 16S rRNA that are involved in tRNA selection in the A site and with the mRNA backbone. Located at the interface of the 30S and 50S subunits, it traverses the body of the 30S subunit contacting proteins on the other side and probably holding the rRNA structure together. The combined cluster of proteins S8, S12 and S17 appears to hold together the shoulder and platform of the 30S subunit. The polypeptide is Small ribosomal subunit protein uS12 (Geotalea daltonii (strain DSM 22248 / JCM 15807 / FRC-32) (Geobacter daltonii)).